The chain runs to 310 residues: UPF0761 membrane protein VFMJ11_0098 (310 aa).

6 helical membrane passes run 34–54 (YMAY…LSVL), 97–117 (MTAV…SSID), 136–156 (FSLY…SLAA), 178–198 (LLGW…YLLV), 207–227 (HALI…VGFA), and 242–262 (ALAA…IVLI).

The protein belongs to the UPF0761 family.

Its subcellular location is the cell inner membrane. The sequence is that of UPF0761 membrane protein VFMJ11_0098 from Aliivibrio fischeri (strain MJ11) (Vibrio fischeri).